The primary structure comprises 941 residues: Cilia- and flagella-associated protein 69 (941 aa).

The segment covering 1 to 10 (MWTEEAAATA) has biased composition (low complexity). The interval 1–23 (MWTEEAAATAEARESGIRNKSSS) is disordered.

It localises to the cell projection. The protein resides in the cilium. The protein localises to the flagellum. Cilium- and flagellum-associated protein. In the olfactory epithelium, regulates the speed of activation and termination of the odor response and thus contributes to the robustness of olfactory transduction pathways. Required for sperm flagellum assembly and stability. In Papio anubis (Olive baboon), this protein is Cilia- and flagella-associated protein 69.